We begin with the raw amino-acid sequence, 320 residues long: o-succinylbenzoate synthase (320 aa).

The active-site Proton donor is K133. The Mg(2+) site is built by D161, E190, and D213. The Proton acceptor role is filled by K235.

The protein belongs to the mandelate racemase/muconate lactonizing enzyme family. MenC type 1 subfamily. It depends on a divalent metal cation as a cofactor.

The catalysed reaction is (1R,6R)-6-hydroxy-2-succinyl-cyclohexa-2,4-diene-1-carboxylate = 2-succinylbenzoate + H2O. It functions in the pathway quinol/quinone metabolism; 1,4-dihydroxy-2-naphthoate biosynthesis; 1,4-dihydroxy-2-naphthoate from chorismate: step 4/7. Its pathway is quinol/quinone metabolism; menaquinone biosynthesis. In terms of biological role, converts 2-succinyl-6-hydroxy-2,4-cyclohexadiene-1-carboxylate (SHCHC) to 2-succinylbenzoate (OSB). The sequence is that of o-succinylbenzoate synthase from Salmonella agona (strain SL483).